Reading from the N-terminus, the 160-residue chain is Transcription antitermination protein NusB (160 aa).

It belongs to the NusB family.

Functionally, involved in transcription antitermination. Required for transcription of ribosomal RNA (rRNA) genes. Binds specifically to the boxA antiterminator sequence of the ribosomal RNA (rrn) operons. The sequence is that of Transcription antitermination protein NusB from Rhizobium rhizogenes (strain K84 / ATCC BAA-868) (Agrobacterium radiobacter).